The sequence spans 643 residues: Phosphomethylpyrimidine synthase (643 aa).

Residues N248, M277, Y306, H342, 362–364 (SRG), 403–406 (DGLR), and E442 contribute to the substrate site. Position 446 (H446) interacts with Zn(2+). Y469 lines the substrate pocket. H510 is a Zn(2+) binding site. [4Fe-4S] cluster is bound by residues C590, C593, and C598.

It belongs to the ThiC family. As to quaternary structure, homodimer. Requires [4Fe-4S] cluster as cofactor.

The catalysed reaction is 5-amino-1-(5-phospho-beta-D-ribosyl)imidazole + S-adenosyl-L-methionine = 4-amino-2-methyl-5-(phosphooxymethyl)pyrimidine + CO + 5'-deoxyadenosine + formate + L-methionine + 3 H(+). Its pathway is cofactor biosynthesis; thiamine diphosphate biosynthesis. In terms of biological role, catalyzes the synthesis of the hydroxymethylpyrimidine phosphate (HMP-P) moiety of thiamine from aminoimidazole ribotide (AIR) in a radical S-adenosyl-L-methionine (SAM)-dependent reaction. The chain is Phosphomethylpyrimidine synthase from Paraburkholderia xenovorans (strain LB400).